A 585-amino-acid chain; its full sequence is Arginine--tRNA ligase (585 aa).

Residues 131-141 (ANPTGPMHVGH) carry the 'HIGH' region motif.

The protein belongs to the class-I aminoacyl-tRNA synthetase family. Monomer.

It localises to the cytoplasm. The catalysed reaction is tRNA(Arg) + L-arginine + ATP = L-arginyl-tRNA(Arg) + AMP + diphosphate. The protein is Arginine--tRNA ligase of Sinorhizobium medicae (strain WSM419) (Ensifer medicae).